The chain runs to 458 residues: Tyrosine phenol-lyase (458 aa).

K258 bears the N6-(pyridoxal phosphate)lysine mark.

This sequence belongs to the beta-eliminating lyase family. As to quaternary structure, homotetramer. Requires pyridoxal 5'-phosphate as cofactor.

It carries out the reaction L-tyrosine + H2O = phenol + pyruvate + NH4(+). This Symbiobacterium thermophilum (strain DSM 24528 / JCM 14929 / IAM 14863 / T) protein is Tyrosine phenol-lyase (tpl).